The primary structure comprises 266 residues: Dolichol-phosphate mannosyltransferase subunit 1 (266 aa).

The span at 1 to 19 (MASPGASRGASAATAAAAS) shows a compositional bias: low complexity. Residues 1–31 (MASPGASRGASAATAAAASPRPPQGRSSRRD) form a disordered region. N-acetylalanine is present on A2. At S3 the chain carries Phosphoserine. Residues P38, Y40, E42, I69, D71, D124, A125, D126, R153, R240, and K246 each contribute to the GDP-alpha-D-mannose site. Residue D126 participates in Mg(2+) binding. D126 provides a ligand contact to Mn(2+).

It belongs to the glycosyltransferase 2 family. In terms of assembly, component of the dolichol-phosphate mannose (DPM) synthase complex composed of DPM1, DPM2 and DPM3; within the complex, directly interacts with DPM3. This interaction may stabilize DPM1. It depends on Mg(2+) as a cofactor. Mn(2+) serves as cofactor. Ca(2+) is required as a cofactor.

The protein localises to the endoplasmic reticulum. The catalysed reaction is a di-trans,poly-cis-dolichyl phosphate + GDP-alpha-D-mannose = a di-trans,poly-cis-dolichyl beta-D-mannosyl phosphate + GDP. Its pathway is protein modification; protein glycosylation. Its function is as follows. Transfers mannose from GDP-mannose to dolichol monophosphate to form dolichol phosphate mannose (Dol-P-Man) which is the mannosyl donor in pathways leading to N-glycosylation, glycosyl phosphatidylinositol membrane anchoring, and O-mannosylation of proteins; catalytic subunit of the dolichol-phosphate mannose (DPM) synthase complex. This Cricetulus griseus (Chinese hamster) protein is Dolichol-phosphate mannosyltransferase subunit 1 (DPM1).